Consider the following 175-residue polypeptide: Ribosome maturation factor RimM (175 aa).

The PRC barrel domain maps to 97 to 169 (EDKFYFHEII…TVRVITPEGL (73 aa)).

This sequence belongs to the RimM family. In terms of assembly, binds ribosomal protein uS19.

It is found in the cytoplasm. In terms of biological role, an accessory protein needed during the final step in the assembly of 30S ribosomal subunit, possibly for assembly of the head region. Essential for efficient processing of 16S rRNA. May be needed both before and after RbfA during the maturation of 16S rRNA. It has affinity for free ribosomal 30S subunits but not for 70S ribosomes. In Christiangramia forsetii (strain DSM 17595 / CGMCC 1.15422 / KT0803) (Gramella forsetii), this protein is Ribosome maturation factor RimM.